Here is a 254-residue protein sequence, read N- to C-terminus: Glutathione S-transferase U12 (254 aa).

The Nuclear localization signal signature appears at 19–23 (KKRKK). Residues 33–114 (TTVKLIGTWA…YVDESWPSDL (82 aa)) enclose the GST N-terminal domain. Residues 43 to 44 (SP), 71 to 72 (GK), 85 to 86 (KV), and 98 to 99 (ES) each bind glutathione. One can recognise a GST C-terminal domain in the interval 120-252 (LPSERAFARF…EFIEFAKKKF (133 aa)).

It belongs to the GST superfamily. Tau family.

It is found in the nucleus. It catalyses the reaction RX + glutathione = an S-substituted glutathione + a halide anion + H(+). Its function is as follows. May be involved in the conjugation of reduced glutathione to a wide number of exogenous and endogenous hydrophobic electrophiles and have a detoxification role against certain herbicides. The chain is Glutathione S-transferase U12 (GSTU12) from Arabidopsis thaliana (Mouse-ear cress).